A 224-amino-acid polypeptide reads, in one-letter code: Proteasome subunit beta (224 aa).

Residues 1 to 6 constitute a propeptide, removed in mature form; by autocatalysis; it reads MDVMKG. T7 (nucleophile) is an active-site residue.

The protein belongs to the peptidase T1B family. As to quaternary structure, the 20S proteasome core is composed of 14 alpha and 14 beta subunits that assemble into four stacked heptameric rings, resulting in a barrel-shaped structure. The two inner rings, each composed of seven catalytic beta subunits, are sandwiched by two outer rings, each composed of seven alpha subunits. The catalytic chamber with the active sites is on the inside of the barrel. Has a gated structure, the ends of the cylinder being occluded by the N-termini of the alpha-subunits. Is capped at one or both ends by the proteasome regulatory ATPase, PAN.

Its subcellular location is the cytoplasm. The catalysed reaction is Cleavage of peptide bonds with very broad specificity.. The formation of the proteasomal ATPase PAN-20S proteasome complex, via the docking of the C-termini of PAN into the intersubunit pockets in the alpha-rings, triggers opening of the gate for substrate entry. Interconversion between the open-gate and close-gate conformations leads to a dynamic regulation of the 20S proteasome proteolysis activity. Its function is as follows. Component of the proteasome core, a large protease complex with broad specificity involved in protein degradation. This Methanocaldococcus fervens (strain DSM 4213 / JCM 15782 / AG86) (Methanococcus fervens) protein is Proteasome subunit beta.